A 435-amino-acid polypeptide reads, in one-letter code: Dual specificity protein kinase FUZ7 (435 aa).

Residues 1 to 61 (MLSSGAGSSI…TIGKSSAVTP (61 aa)) form a disordered region. Positions 46–59 (AASNASTIGKSSAV) are enriched in polar residues. A Protein kinase domain is found at 109-417 (LKTLSELGAG…PKDLTKHQYV (309 aa)). ATP-binding positions include 115–123 (LGAGNGGTV) and K138. The Proton acceptor role is filled by D231. The segment at 307-359 (NEEDDDSDADNNYTNEDLAGTLSPTKPAPMISLGQNEKQRRRKSKPAGVSLEG) is disordered.

It belongs to the protein kinase superfamily. STE Ser/Thr protein kinase family. MAP kinase kinase subfamily.

The catalysed reaction is L-seryl-[protein] + ATP = O-phospho-L-seryl-[protein] + ADP + H(+). It catalyses the reaction L-threonyl-[protein] + ATP = O-phospho-L-threonyl-[protein] + ADP + H(+). The enzyme catalyses L-tyrosyl-[protein] + ATP = O-phospho-L-tyrosyl-[protein] + ADP + H(+). Protein kinase that is necessary for a-locus-dependent processes, such as conjugation tube formation, filament formation, and maintenance of filamentous growth, and for a-locus-independent processes, such as tumor induction and teliospore germination. The chain is Dual specificity protein kinase FUZ7 (FUZ7) from Mycosarcoma maydis (Corn smut fungus).